We begin with the raw amino-acid sequence, 71 residues long: Large ribosomal subunit protein bL28 (71 aa).

It belongs to the bacterial ribosomal protein bL28 family.

The polypeptide is Large ribosomal subunit protein bL28 (Rubrobacter xylanophilus (strain DSM 9941 / JCM 11954 / NBRC 16129 / PRD-1)).